The chain runs to 329 residues: Sialic acid-binding periplasmic protein SiaP (329 aa).

The N-terminal stretch at 1-23 (MMKLTKLFLATAISLGVSSAVLA) is a signal peptide. Asn33, Asp72, Glu90, Arg150, Arg170, and Asn210 together coordinate N-acetyl-beta-neuraminate.

This sequence belongs to the bacterial solute-binding protein 7 family. In terms of assembly, the complex comprises the extracytoplasmic solute receptor protein SiaP, and the fused transmembrane protein SiaT.

The protein resides in the periplasm. Its function is as follows. Part of the tripartite ATP-independent periplasmic (TRAP) transport system SiaPT involved in the uptake of sialic acid (N-acetyl-beta-neuraminate). This protein specifically binds sialic acid with high affinity. N-Acetylneuraminate (sialic acid) can then be incorporated into the lipooligosaccharides (LOS) as a terminal non-reducing sugar, protecting the bacterium from complement-mediated killing by normal human serum. This Haemophilus influenzae (strain ATCC 51907 / DSM 11121 / KW20 / Rd) protein is Sialic acid-binding periplasmic protein SiaP (siaP).